The chain runs to 431 residues: Divergent protein kinase domain 1B (431 aa).

Residues 1–30 (MRKLRRLVHMVLFCPISKGLQSRLPGIKVK) lie on the Cytoplasmic side of the membrane. A May mediate ER retention motif is present at residues 5-6 (RR). The chain crosses the membrane as a helical span at residues 31–51 (YLFLAWLSVFVGSWVVYMHYS). Residues 52–431 (SYSELCRGHV…WKKISNTKYS (380 aa)) lie on the Lumenal side of the membrane. Intrachain disulfides connect cysteine 57–cysteine 94 and cysteine 62–cysteine 117.

Belongs to the DIPK family. Among the many cysteines in the lumenal domain, most are probably involved in disulfide bonds.

It is found in the endoplasmic reticulum membrane. This Xenopus tropicalis (Western clawed frog) protein is Divergent protein kinase domain 1B (dipk1b).